Consider the following 313-residue polypeptide: Peptidyl-prolyl cis-trans isomerase 9 (313 aa).

The PPIase cyclophilin-type domain maps to 9–174 (FLDMALDEKP…AKVRIFNSGE (166 aa)). Composition is skewed to basic and acidic residues over residues 216–230 (EERE…ESSR) and 253–269 (RGDR…KDDF). Disordered stretches follow at residues 216–274 (EERE…IAVR) and 288–313 (TPEH…DLQP).

This sequence belongs to the cyclophilin-type PPIase family.

The enzyme catalyses [protein]-peptidylproline (omega=180) = [protein]-peptidylproline (omega=0). Functionally, PPIases accelerate the folding of proteins. It catalyzes the cis-trans isomerization of proline imid ic peptide bonds in oligopeptides. Thought to function as a catalyst in the folding and modification of cuticle collagens. The sequence is that of Peptidyl-prolyl cis-trans isomerase 9 from Caenorhabditis briggsae.